Here is a 426-residue protein sequence, read N- to C-terminus: Proline--tRNA ligase (426 aa).

It belongs to the class-II aminoacyl-tRNA synthetase family. ProS type 2 subfamily. In terms of assembly, homodimer.

It localises to the cytoplasm. The catalysed reaction is tRNA(Pro) + L-proline + ATP = L-prolyl-tRNA(Pro) + AMP + diphosphate. Functionally, catalyzes the attachment of proline to tRNA(Pro) in a two-step reaction: proline is first activated by ATP to form Pro-AMP and then transferred to the acceptor end of tRNA(Pro). The sequence is that of Proline--tRNA ligase from Rickettsia africae (strain ESF-5).